The chain runs to 239 residues: Fatty acid metabolism regulator protein (239 aa).

The 69-residue stretch at 6–74 (KGPASFAEKY…HGKPTRVNNF (69 aa)) folds into the HTH gntR-type domain. The segment at residues 34–53 (ERELSELIGVTRTTLREVLQ) is a DNA-binding region (H-T-H motif).

As to quaternary structure, homodimer.

The protein localises to the cytoplasm. In terms of biological role, multifunctional regulator of fatty acid metabolism. This chain is Fatty acid metabolism regulator protein, found in Shewanella pealeana (strain ATCC 700345 / ANG-SQ1).